Consider the following 1331-residue polypeptide: Beta-mannanase/endoglucanase A (1331 aa).

Residues 1 to 41 form the signal peptide; that stretch reads MRLKTKIRKKWLSVLCTVVFLLNILFIANVTILPKVGAATS. Positions 42–325 are catalytic (mannanase); that stretch reads NDGVVKIDTS…YKTNAIGTSS (284 aa). The Proton donor role is filled by glutamate 162. Glutamate 257 serves as the catalytic Nucleophile. Disordered stretches follow at residues 319 to 363, 515 to 566, and 717 to 780; these read NAIG…TPAT, PSGA…TPAT, and EPSG…PLPT. The segment covering 323–335 has biased composition (low complexity); that stretch reads TSSTPTPTSTVTP. Residues 363 to 516 form the CBM3 1 domain; sequence TSGQIKVLYA…GVLVWGQEPS (154 aa). Pro residues-rich tracts occupy residues 521 to 541 and 551 to 561; these read APAP…PTVT and TPTPTPTPTPV. The CBM3 2 domain occupies 566–719; the sequence is TGGQIKVLYA…GVLVWGQEPS (154 aa). Residues 721–735 show a composition bias toward low complexity; it reads TTPSPTSTPTVTVTP. Composition is skewed to pro residues over residues 736 to 756 and 766 to 780; these read TPTP…PTVT and TPTP…PLPT. A catalytic (endoglucanase) region spans residues 781–1331; it reads ISPSPSVVEI…RNLVFMRALV (551 aa).

In the N-terminal section; belongs to the glycosyl hydrolase 5 (cellulase A) family. It in the C-terminal section; belongs to the glycosyl hydrolase 44 (cellulase J) family.

It carries out the reaction Random hydrolysis of (1-&gt;4)-beta-D-mannosidic linkages in mannans, galactomannans and glucomannans.. The enzyme catalyses Endohydrolysis of (1-&gt;4)-beta-D-glucosidic linkages in cellulose, lichenin and cereal beta-D-glucans.. Degradation of hemicelluloses, the second most abundant polysaccharides in nature. Contains two catalytic domains with mannanase and endoglucanase activities. The chain is Beta-mannanase/endoglucanase A (manA) from Caldicellulosiruptor saccharolyticus (Caldocellum saccharolyticum).